We begin with the raw amino-acid sequence, 442 residues long: tRNA modification GTPase MnmE (442 aa).

(6S)-5-formyl-5,6,7,8-tetrahydrofolate contacts are provided by Arg-27, Glu-84, and Lys-124. Positions 221–366 constitute a TrmE-type G domain; sequence GLHVVIVGAP…LLTNLQNFAE (146 aa). GTP is bound by residues 231 to 236, 250 to 256, and 275 to 278; these read NAGKSS, SEEAGTT, and DTAG. Ser-235 and Thr-256 together coordinate Mg(2+). Lys-442 provides a ligand contact to (6S)-5-formyl-5,6,7,8-tetrahydrofolate.

Belongs to the TRAFAC class TrmE-Era-EngA-EngB-Septin-like GTPase superfamily. TrmE GTPase family. Homodimer. Heterotetramer of two MnmE and two MnmG subunits. K(+) serves as cofactor.

The protein resides in the cytoplasm. Its function is as follows. Exhibits a very high intrinsic GTPase hydrolysis rate. Involved in the addition of a carboxymethylaminomethyl (cmnm) group at the wobble position (U34) of certain tRNAs, forming tRNA-cmnm(5)s(2)U34. This Brucella anthropi (strain ATCC 49188 / DSM 6882 / CCUG 24695 / JCM 21032 / LMG 3331 / NBRC 15819 / NCTC 12168 / Alc 37) (Ochrobactrum anthropi) protein is tRNA modification GTPase MnmE.